Reading from the N-terminus, the 314-residue chain is Ribosomal RNA small subunit methyltransferase H (314 aa).

Residues 31–33, aspartate 49, phenylalanine 76, aspartate 118, and glutamine 125 each bind S-adenosyl-L-methionine; that span reads GGY.

Belongs to the methyltransferase superfamily. RsmH family.

The protein resides in the cytoplasm. It catalyses the reaction cytidine(1402) in 16S rRNA + S-adenosyl-L-methionine = N(4)-methylcytidine(1402) in 16S rRNA + S-adenosyl-L-homocysteine + H(+). Functionally, specifically methylates the N4 position of cytidine in position 1402 (C1402) of 16S rRNA. This is Ribosomal RNA small subunit methyltransferase H from Wolbachia pipientis wMel.